The sequence spans 248 residues: FCS-Like Zinc finger 14 (248 aa).

Polar residues predominate over residues 85 to 94 (VCRSEPNQPG). A disordered region spans residues 85 to 108 (VCRSEPNQPGRSDPVQFMSHGGST). An FLZ-type zinc finger spans residues 181-224 (GFLNSCYLCRKKLHGQDIFIYRGEKAFCSTECRSSHIANDERKE).

It belongs to the FLZ family. As to quaternary structure, interacts with KIN10 and KIN11 via its FLZ-type zinc finger domain. Interacts with KINB1, KINB2 and KINB3 via its N-terminal part.

Its subcellular location is the cytoplasm. It localises to the nucleus. May act as an adapter to facilitate the interaction of SnRK1 complex with effector proteins, conferring tissue- and stimulus-type specific differences in the SnRK1 regulation pathway. The protein is FCS-Like Zinc finger 14 of Arabidopsis thaliana (Mouse-ear cress).